A 352-amino-acid polypeptide reads, in one-letter code: Ribosomal RNA large subunit methyltransferase M (352 aa).

S-adenosyl-L-methionine is bound by residues Ser-184, 217–220 (APGG), Asp-236, Asp-256, and Asp-272. Lys-301 functions as the Proton acceptor in the catalytic mechanism.

Belongs to the class I-like SAM-binding methyltransferase superfamily. RNA methyltransferase RlmE family. RlmM subfamily. Monomer.

It is found in the cytoplasm. The enzyme catalyses cytidine(2498) in 23S rRNA + S-adenosyl-L-methionine = 2'-O-methylcytidine(2498) in 23S rRNA + S-adenosyl-L-homocysteine + H(+). Its function is as follows. Catalyzes the 2'-O-methylation at nucleotide C2498 in 23S rRNA. In Pseudomonas paraeruginosa (strain DSM 24068 / PA7) (Pseudomonas aeruginosa (strain PA7)), this protein is Ribosomal RNA large subunit methyltransferase M.